The primary structure comprises 497 residues: MDPPSLLSLALLLLAAAAAAAFVLFPRRRSPEKKPSSGNPGSLSELIKNGHRILDWMVEILAASPTNTVATYMGVVTANPANVEHMLKTKFENYPKGDRFVTLLEDFLGRGIFNSDGDHWKLQRKTASLEFNTKTIRTFVMENVRVSVVDRLIPIFARAAASGETIDLQETLERFAFDNVCKVSFNEDTGRLSGDDTMEGREFARAFEQASELIVGRYKHPFLLSWKLMRFFNIGDERRLKEKIATVHRFATSVIRRRKSAASLGDDLLSRFIAEADYPDEFLRDIIISFVLAGRDTTSATLTWFFWLASTRPEVLARVEAEVNAVRRKNGTCAGVMFTLEEVREMDFLHAALSEALRLYPPVPLQTRACHESDEFPDGTKVRPGTTVMYNSYAMGRMKSIWGEDYAEFRPERWLDKGGGFQPRSPFRFPVFHAGPRMCLGKEMAYIQMKAVAASVVERFEVVVMDKEKVREKDYTMILRVKGGLPVRLKEKSVAAG.

The helical transmembrane segment at Leu-6–Pro-26 threads the bilayer. Cys-439 is a heme binding site.

It belongs to the cytochrome P450 family. In terms of tissue distribution, mainly expressed in roots and, at low levels, in leaves, fruits and stems.

The protein localises to the membrane. It participates in steroid metabolism; cholesterol metabolism. Involved in the biosynthesis of spiroketal steroid and saponin natural products from cholesterol such as diosgenin and analogs (e.g. furostanol and spirostanol), plant defense compounds used as main precursors for the industrial production of steroid hormones. During the 5,6-spiroketalization of cholesterol, may catalyze the 27-monohydroxylation of furostanol-type steroid to an intermediate product that undergoes a stereospecific formation of the terminal heterocycle to yield diosgenin. In Paris polyphylla (Daiswa polyphylla), this protein is Cytochrome P450 CYP94D108.